Here is a 122-residue protein sequence, read N- to C-terminus: Large ribosomal subunit protein eL8 (122 aa).

The protein belongs to the eukaryotic ribosomal protein eL8 family. Part of the 50S ribosomal subunit. Probably part of the RNase P complex.

It is found in the cytoplasm. Functionally, multifunctional RNA-binding protein that recognizes the K-turn motif in ribosomal RNA, the RNA component of RNase P, box H/ACA, box C/D and box C'/D' sRNAs. This Methanothrix thermoacetophila (strain DSM 6194 / JCM 14653 / NBRC 101360 / PT) (Methanosaeta thermophila) protein is Large ribosomal subunit protein eL8.